A 104-amino-acid polypeptide reads, in one-letter code: MLETLYQEALKRKKEPKEGSYTSYLYDKGLDKILKKVGEEATEVVIAAKNADKNEMANETADLLYHLAVALVETGVSLEEVETVLQARQGKQSRIHDRPEIDHY.

Belongs to the PRA-PH family.

The protein localises to the cytoplasm. The catalysed reaction is 1-(5-phospho-beta-D-ribosyl)-ATP + H2O = 1-(5-phospho-beta-D-ribosyl)-5'-AMP + diphosphate + H(+). It participates in amino-acid biosynthesis; L-histidine biosynthesis; L-histidine from 5-phospho-alpha-D-ribose 1-diphosphate: step 2/9. The sequence is that of Phosphoribosyl-ATP pyrophosphatase from Streptococcus sanguinis (strain SK36).